A 201-amino-acid chain; its full sequence is Fimbrial protein FimX (201 aa).

The signal sequence occupies residues 1-21 (MQAKTFLLGAALAGVALAAHA). A disulfide bridge connects residues cysteine 37 and cysteine 79.

It belongs to the fimbrial protein family.

It is found in the fimbrium. In terms of biological role, bordetella pertussis is the causative agent of whooping cough. An essential step in the disease process is the attachment of the bacteria to the ciliated epithelium of the respiratory tract, enabling the organism to resist normal host-clearance mechanisms. It is unclear which bacterial cell surface component are responsible for adherence but the fimbriae of B.pertussis are prime candidates for being involved in this process. This Bordetella pertussis (strain Tohama I / ATCC BAA-589 / NCTC 13251) protein is Fimbrial protein FimX (fimX).